The primary structure comprises 154 residues: Myoglobin (154 aa).

One can recognise a Globin domain in the interval 2–148 (GLSDGEWQSV…FRNDIAAKYK (147 aa)). At Ser-4 the chain carries Phosphoserine. Nitrite is bound at residue His-65. An O2-binding site is contributed by His-65. Thr-68 is modified (phosphothreonine). A heme b-binding site is contributed by His-94.

It belongs to the globin family. Monomeric.

It localises to the cytoplasm. It is found in the sarcoplasm. The enzyme catalyses Fe(III)-heme b-[protein] + nitric oxide + H2O = Fe(II)-heme b-[protein] + nitrite + 2 H(+). The catalysed reaction is H2O2 + AH2 = A + 2 H2O. In terms of biological role, monomeric heme protein which primary function is to store oxygen and facilitate its diffusion within muscle tissues. Reversibly binds oxygen through a pentacoordinated heme iron and enables its timely and efficient release as needed during periods of heightened demand. Depending on the oxidative conditions of tissues and cells, and in addition to its ability to bind oxygen, it also has a nitrite reductase activity whereby it regulates the production of bioactive nitric oxide. Under stress conditions, like hypoxia and anoxia, it also protects cells against reactive oxygen species thanks to its pseudoperoxidase activity. This is Myoglobin (MB) from Nycticebus coucang (Slow loris).